We begin with the raw amino-acid sequence, 605 residues long: Protein cueball (605 aa).

A signal peptide spans 1–31 (MAYIDQKHNTFWDDFAIALRDKIVFLNSTWG). Residues Asn-27, Asn-64, and Asn-85 are each glycosylated (N-linked (GlcNAc...) asparagine). Residues 32–486 (EIHASAHRFE…QCGPAPPVQG (455 aa)) lie on the Extracellular side of the membrane. 4 LDL-receptor class B repeats span residues 53 to 97 (EMIY…DPLN), 98 to 145 (RNLF…DICR), 146 to 190 (RQLY…DQLS), and 191 to 236 (DRIF…NEDA). N-linked (GlcNAc...) asparagine glycosylation is found at Asn-261 and Asn-314. EGF-like domains are found at residues 322-359 (EGDRISQLEREHCLNGASFMSRGEFCICPVGFKGARCE) and 394-431 (EYHKCNGHCLNSGHCSMDKESDAMRCECRPNFGGERCE). Cystine bridges form between Cys-334–Cys-347, Cys-349–Cys-358, Cys-398–Cys-408, Cys-402–Cys-419, and Cys-421–Cys-430. Asn-433 and Asn-464 each carry an N-linked (GlcNAc...) asparagine glycan. A helical transmembrane segment spans residues 487-507 (PLIIVIVLGLVTTSGLVALTV). Topologically, residues 508–605 (HGVRLIYKPK…IHSMEDNLLS (98 aa)) are cytoplasmic.

It belongs to the cueball family.

The protein localises to the cell membrane. Has a role in spermatogenesis and oogenesis. This Drosophila grimshawi (Hawaiian fruit fly) protein is Protein cueball.